The sequence spans 291 residues: Diaminopimelate epimerase (291 aa).

Substrate contacts are provided by Asn13, Gln46, and Asn66. Cys75 functions as the Proton donor in the catalytic mechanism. Substrate contacts are provided by residues 76–77 (GN), Asn156, Asn189, and 207–208 (ER). Cys216 serves as the catalytic Proton acceptor. 217-218 (GS) is a binding site for substrate.

This sequence belongs to the diaminopimelate epimerase family. Homodimer.

Its subcellular location is the cytoplasm. The enzyme catalyses (2S,6S)-2,6-diaminopimelate = meso-2,6-diaminopimelate. The protein operates within amino-acid biosynthesis; L-lysine biosynthesis via DAP pathway; DL-2,6-diaminopimelate from LL-2,6-diaminopimelate: step 1/1. In terms of biological role, catalyzes the stereoinversion of LL-2,6-diaminopimelate (L,L-DAP) to meso-diaminopimelate (meso-DAP), a precursor of L-lysine and an essential component of the bacterial peptidoglycan. The chain is Diaminopimelate epimerase from Rhodospirillum centenum (strain ATCC 51521 / SW).